Here is a 483-residue protein sequence, read N- to C-terminus: Altronate oxidoreductase (483 aa).

18-29 (IIQFGEGNFLRA) is a binding site for NAD(+).

The protein belongs to the mannitol dehydrogenase family. UxaB subfamily.

The catalysed reaction is D-altronate + NAD(+) = keto-D-tagaturonate + NADH + H(+). The protein operates within carbohydrate metabolism; pentose and glucuronate interconversion. The protein is Altronate oxidoreductase of Klebsiella pneumoniae (strain 342).